A 69-amino-acid chain; its full sequence is Sec-independent protein translocase protein TatA (69 aa).

A helical transmembrane segment spans residues 1–21 (MFGLGTMEMVIILVIVLVIFG). The disordered stretch occupies residues 44–69 (NAEDDAPAEPEVSKPAAAESTEKKDA).

It belongs to the TatA/E family. As to quaternary structure, the Tat system comprises two distinct complexes: a TatABC complex, containing multiple copies of TatA, TatB and TatC subunits, and a separate TatA complex, containing only TatA subunits. Substrates initially bind to the TatABC complex, which probably triggers association of the separate TatA complex to form the active translocon.

The protein localises to the cell inner membrane. Its function is as follows. Part of the twin-arginine translocation (Tat) system that transports large folded proteins containing a characteristic twin-arginine motif in their signal peptide across membranes. TatA could form the protein-conducting channel of the Tat system. This is Sec-independent protein translocase protein TatA from Magnetococcus marinus (strain ATCC BAA-1437 / JCM 17883 / MC-1).